A 312-amino-acid polypeptide reads, in one-letter code: Formimidoylglutamase (312 aa).

Residues H128, D153, H155, D157, D240, and D242 each coordinate Mn(2+).

This sequence belongs to the arginase family. Requires Mn(2+) as cofactor.

The enzyme catalyses N-formimidoyl-L-glutamate + H2O = formamide + L-glutamate. It participates in amino-acid degradation; L-histidine degradation into L-glutamate; L-glutamate from N-formimidoyl-L-glutamate (hydrolase route): step 1/1. Catalyzes the conversion of N-formimidoyl-L-glutamate to L-glutamate and formamide. This is Formimidoylglutamase from Enterobacter sp. (strain 638).